We begin with the raw amino-acid sequence, 398 residues long: AT-rich interactive domain-containing protein 6 (398 aa).

The segment at 25–87 is disordered; that stretch reads EPLEPENDHN…PKTEGENAKK (63 aa). Positions 106 to 197 constitute an ARID domain; that stretch reads PVEQVAFLRE…ALLEYEKCLR (92 aa). Residues 213–236 are disordered; it reads SSVEKEPSSHQGSGSGRARRDSAA. The region spanning 305–398 is the sHSP domain; sequence VGPVADWVKI…RLFIRVPFEQ (94 aa).

It belongs to the small heat shock protein (HSP20) family.

It is found in the nucleus. The sequence is that of AT-rich interactive domain-containing protein 6 (ARID6) from Arabidopsis thaliana (Mouse-ear cress).